Here is a 329-residue protein sequence, read N- to C-terminus: Biotin synthase (329 aa).

The region spanning 38 to 262 is the Radical SAM core domain; sequence NTIQVSTLLS…IMPHSYIRLS (225 aa). [4Fe-4S] cluster is bound by residues Cys-53, Cys-57, and Cys-60. Positions 97, 128, 188, and 260 each coordinate [2Fe-2S] cluster.

This sequence belongs to the radical SAM superfamily. Biotin synthase family. Homodimer. The cofactor is [4Fe-4S] cluster. [2Fe-2S] cluster serves as cofactor.

It carries out the reaction (4R,5S)-dethiobiotin + (sulfur carrier)-SH + 2 reduced [2Fe-2S]-[ferredoxin] + 2 S-adenosyl-L-methionine = (sulfur carrier)-H + biotin + 2 5'-deoxyadenosine + 2 L-methionine + 2 oxidized [2Fe-2S]-[ferredoxin]. It participates in cofactor biosynthesis; biotin biosynthesis; biotin from 7,8-diaminononanoate: step 2/2. Functionally, catalyzes the conversion of dethiobiotin (DTB) to biotin by the insertion of a sulfur atom into dethiobiotin via a radical-based mechanism. The polypeptide is Biotin synthase (Acinetobacter baumannii (strain SDF)).